Reading from the N-terminus, the 178-residue chain is NAD(P)H-quinone oxidoreductase subunit 6, chloroplastic (178 aa).

5 consecutive transmembrane segments (helical) span residues Phe10–Thr30, Pro32–Leu52, Ala61–Met81, Leu94–Ile114, and Phe154–Ala174.

It belongs to the complex I subunit 6 family. NDH is composed of at least 16 different subunits, 5 of which are encoded in the nucleus.

Its subcellular location is the plastid. It is found in the chloroplast thylakoid membrane. The enzyme catalyses a plastoquinone + NADH + (n+1) H(+)(in) = a plastoquinol + NAD(+) + n H(+)(out). The catalysed reaction is a plastoquinone + NADPH + (n+1) H(+)(in) = a plastoquinol + NADP(+) + n H(+)(out). Functionally, NDH shuttles electrons from NAD(P)H:plastoquinone, via FMN and iron-sulfur (Fe-S) centers, to quinones in the photosynthetic chain and possibly in a chloroplast respiratory chain. The immediate electron acceptor for the enzyme in this species is believed to be plastoquinone. Couples the redox reaction to proton translocation, and thus conserves the redox energy in a proton gradient. The polypeptide is NAD(P)H-quinone oxidoreductase subunit 6, chloroplastic (ndhG) (Citrus sinensis (Sweet orange)).